Reading from the N-terminus, the 342-residue chain is 3-isopropylmalate dehydrogenase (342 aa).

Arginine 92, arginine 102, arginine 126, and aspartate 216 together coordinate substrate. Mg(2+) contacts are provided by aspartate 216, aspartate 240, and aspartate 244. Glycine 276–aspartate 288 lines the NAD(+) pocket.

Belongs to the isocitrate and isopropylmalate dehydrogenases family. LeuB type 2 subfamily. As to quaternary structure, homodimer. Requires Mg(2+) as cofactor. Mn(2+) is required as a cofactor.

The protein resides in the cytoplasm. It catalyses the reaction (2R,3S)-3-isopropylmalate + NAD(+) = 4-methyl-2-oxopentanoate + CO2 + NADH. The protein operates within amino-acid biosynthesis; L-leucine biosynthesis; L-leucine from 3-methyl-2-oxobutanoate: step 3/4. Functionally, catalyzes the oxidation of 3-carboxy-2-hydroxy-4-methylpentanoate (3-isopropylmalate) to 3-carboxy-4-methyl-2-oxopentanoate. The product decarboxylates to 4-methyl-2 oxopentanoate. The protein is 3-isopropylmalate dehydrogenase of Corynebacterium kroppenstedtii (strain DSM 44385 / JCM 11950 / CIP 105744 / CCUG 35717).